We begin with the raw amino-acid sequence, 597 residues long: MGEALNGLKRNIMCGDARESHIGQKVTVMGWVQRNRNLGGLQFIDLRDREGILQVVFNDDLGEEILEKAKSIRPEYCIAVTGEIVKRESVNPNMPTGMVELKAEELKILSESDTPPIYIKEDLDAAESIRLKYRYLDLRRPDMQNIFKIRHKTTKAIRDYLDQNGFLEMETPILTKSTPEGARDYLVPSRNYPGMFYALPQSPQLFKQLLMVSGFDRYFQIVKCFRDEDLRANRQPEFTQVDLEMSFVEQDDVMALNEGLIKHVFKEVLGVDVKTPIKRMTFKDAMEKYGSDKPDLRFGMEITNLSDVVKECGFKVFTDAVANGGSVRGLCLEGGASMGRKDIDRLGEFVKTFKAKGLAWIQLKEEGVKSPIAKFFSEEELNKIIETMGAKTGDLILIVADKNSVVLKALGELRLELSRKFDLVKDKSEFNFTWITEFDLLEYDEEEGRYFAAHHPFTMPMDEDIKYLDTDPGRVRAKAYDLVLNGEELGGGSIRIHDTKLQEKMFEVLGFTQESAWERFGFLLEAFKFGPPPHGGLAFGLDRMIMFLAGTENIKDVITFPKNQNAFCYLTEAPNIVDEEQLKELGIETIKKEDTAE.

Residue glutamate 180 coordinates L-aspartate. Residues 204–207 (QLFK) are aspartate. Arginine 226 is an L-aspartate binding site. Residues 226–228 (RDE) and glutamine 235 contribute to the ATP site. Histidine 454 serves as a coordination point for L-aspartate. Glutamate 488 is a binding site for ATP. Arginine 495 is an L-aspartate binding site. An ATP-binding site is contributed by 540-543 (GLDR).

The protein belongs to the class-II aminoacyl-tRNA synthetase family. Type 1 subfamily. As to quaternary structure, homodimer.

It is found in the cytoplasm. It carries out the reaction tRNA(Asp) + L-aspartate + ATP = L-aspartyl-tRNA(Asp) + AMP + diphosphate. In terms of biological role, catalyzes the attachment of L-aspartate to tRNA(Asp) in a two-step reaction: L-aspartate is first activated by ATP to form Asp-AMP and then transferred to the acceptor end of tRNA(Asp). The polypeptide is Aspartate--tRNA ligase (Clostridium perfringens (strain ATCC 13124 / DSM 756 / JCM 1290 / NCIMB 6125 / NCTC 8237 / Type A)).